A 559-amino-acid polypeptide reads, in one-letter code: DnaJ homolog subfamily C member 11 (559 aa).

Ala-2 carries the N-acetylalanine modification. One can recognise a J domain in the interval 14-82; it reads DYYSLLNVRR…QTRAIYDIYG (69 aa). Ser-204 carries the phosphoserine modification. Residues 415 to 457 adopt a coiled-coil conformation; that stretch reads QKEKELEKQRENTASDILQKKQEAEAAVRLMQESVRRIIEAEE.

Belongs to the DNAJC11 family. Associates with the mitochondrial contact site and cristae organizing system (MICOS) complex, composed of at least MICOS10/MIC10, CHCHD3/MIC19, CHCHD6/MIC25, APOOL/MIC27, IMMT/MIC60, APOO/MIC23/MIC26 and QIL1/MIC13. This complex was also known under the names MINOS or MitOS complex. The MICOS complex associates with mitochondrial outer membrane proteins SAMM50, MTX1 and MTX2 (together described as components of the mitochondrial outer membrane sorting assembly machinery (SAM) complex) and DNAJC11, mitochondrial inner membrane protein TMEM11 and with HSPA9. The MICOS and SAM complexes together with DNAJC11 are part of a large protein complex spanning both membranes termed the mitochondrial intermembrane space bridging (MIB) complex.

It is found in the mitochondrion. Its subcellular location is the mitochondrion outer membrane. Its function is as follows. Required for mitochondrial inner membrane organization. Seems to function through its association with the MICOS complex and the mitochondrial outer membrane sorting assembly machinery (SAM) complex. The chain is DnaJ homolog subfamily C member 11 (Dnajc11) from Mus musculus (Mouse).